The following is a 450-amino-acid chain: Chromosomal replication initiator protein DnaA (450 aa).

The domain I, interacts with DnaA modulators stretch occupies residues 1 to 73 (MNTKELWIEV…KNILKKLTGI (73 aa)). The domain II stretch occupies residues 73–104 (IQYNISFELEKNINKQASVISKIDTLTENNNL). Positions 105–326 (AYYENYTFEN…GAIKRLLFLA (222 aa)) are domain III, AAA+ region. Residues G149, G151, K152, and T153 each contribute to the ATP site. A domain IV, binds dsDNA region spans residues 327 to 450 (VMNKKPNEII…NAIRRKIEGR (124 aa)).

This sequence belongs to the DnaA family. Oligomerizes as a right-handed, spiral filament on DNA at oriC.

Its subcellular location is the cytoplasm. In terms of biological role, plays an essential role in the initiation and regulation of chromosomal replication. ATP-DnaA binds to the origin of replication (oriC) to initiate formation of the DNA replication initiation complex once per cell cycle. Binds the DnaA box (a 9 base pair repeat at the origin) and separates the double-stranded (ds)DNA. Forms a right-handed helical filament on oriC DNA; dsDNA binds to the exterior of the filament while single-stranded (ss)DNA is stabiized in the filament's interior. The ATP-DnaA-oriC complex binds and stabilizes one strand of the AT-rich DNA unwinding element (DUE), permitting loading of DNA polymerase. After initiation quickly degrades to an ADP-DnaA complex that is not apt for DNA replication. Binds acidic phospholipids. The polypeptide is Chromosomal replication initiator protein DnaA (Spiroplasma citri).